The following is a 240-amino-acid chain: Fibronectin type III domain-containing protein 5 (240 aa).

A compositionally biased stretch (gly residues) spans 1-10 (MQAARGGAGR). The disordered stretch occupies residues 1–30 (MQAARGGAGRPGREGRGLERECERSPGVGA). Positions 11–24 (PGREGRGLERECER) are enriched in basic and acidic residues. Residues 64 to 155 (APVNVTVRHL…EPVLFKTPRE (92 aa)) form the Fibronectin type-III domain. Asn-67 and Asn-112 each carry an N-linked (GlcNAc...) asparagine glycan. Residues 181-201 (GEVLIIVVVLFMWAGVIALFC) traverse the membrane as a helical segment. Residues 210–221 (NEPNNNKEKTKS) show a composition bias toward basic and acidic residues. Residues 210 to 240 (NEPNNNKEKTKSASETSTPEHQGGGLLRSKI) are disordered. The segment covering 231–240 (QGGGLLRSKI) has biased composition (gly residues). Residues 238 to 240 (SKI) carry the Microbody targeting signal motif.

Dimer; may exist in other oligomeric forms. In terms of processing, N-Glycosylated. The extracellular domain is cleaved and released from the cell membrane.

Its subcellular location is the cell membrane. It is found in the peroxisome membrane. It localises to the secreted. In terms of biological role, mediates beneficial effects of muscular exercise. Induces browning of white adipose tissue by stimulating UCP1 expression, at least in part, via the nuclear receptor PPARA. This Rattus norvegicus (Rat) protein is Fibronectin type III domain-containing protein 5 (Fndc5).